The chain runs to 209 residues: Ribonuclease HII (209 aa).

One can recognise an RNase H type-2 domain in the interval Ser5–Leu202. Residues Asp11, Glu12, and Asp108 each contribute to the a divalent metal cation site.

Belongs to the RNase HII family. Mn(2+) serves as cofactor. The cofactor is Mg(2+).

It localises to the cytoplasm. The enzyme catalyses Endonucleolytic cleavage to 5'-phosphomonoester.. Its function is as follows. Endonuclease that specifically degrades the RNA of RNA-DNA hybrids. This Helicobacter pylori (strain J99 / ATCC 700824) (Campylobacter pylori J99) protein is Ribonuclease HII (rnhB).